The primary structure comprises 91 residues: UPF0223 protein SAB0963 (91 aa).

The protein belongs to the UPF0223 family.

In Staphylococcus aureus (strain bovine RF122 / ET3-1), this protein is UPF0223 protein SAB0963.